Here is a 257-residue protein sequence, read N- to C-terminus: Capsid protein (257 aa).

Positions 3–20 (KRTGDILMSSPLSKFRRK) match the Bipartite nuclear localization signal motif. The short motif at 40–54 (KRRSWTYRPMYRKPR) is the Nuclear localization signal element. A zinc finger lies at 68–85 (CEGPCKVQSYEQRDDVKH). The Nuclear export signal signature appears at 101–122 (ITHRVGKRFCIKSIYILGKIWM). Residues 201 to 248 (KRFFKVNTHVVYNHQEQAKYENHTENALLLYMACTHASNPVYATLKIR) carry the Bipartite nuclear localization signal motif.

The protein belongs to the geminiviridae capsid protein family. As to quaternary structure, homomultimer. Binds to single-stranded and double-stranded viral DNA. Interacts (via nuclear localization signals) with host importin alpha-1a.

Its subcellular location is the virion. It is found in the host nucleus. Functionally, encapsidates the viral genome into characteristic twinned ('geminate') particles. Binds the genomic viral ssDNA and shuttles it into and out of the cell nucleus. Plays a role in protection of the genome from degradation, virus acquisition and transmission by insect vectors, infectivity, and systemic movement. The CP of monopartite geminiviruses is absolutely essential for virus movement. The polypeptide is Capsid protein (Solanum lycopersicum (Tomato)).